Reading from the N-terminus, the 166-residue chain is Putative 4-hydroxy-4-methyl-2-oxoglutarate aldolase (166 aa).

Substrate is bound by residues 81–84 (GDII) and Arg103. Asp104 is a binding site for a divalent metal cation.

Belongs to the class II aldolase/RraA-like family. As to quaternary structure, homotrimer. A divalent metal cation serves as cofactor.

The catalysed reaction is 4-hydroxy-4-methyl-2-oxoglutarate = 2 pyruvate. The enzyme catalyses oxaloacetate + H(+) = pyruvate + CO2. Its function is as follows. Catalyzes the aldol cleavage of 4-hydroxy-4-methyl-2-oxoglutarate (HMG) into 2 molecules of pyruvate. Also contains a secondary oxaloacetate (OAA) decarboxylase activity due to the common pyruvate enolate transition state formed following C-C bond cleavage in the retro-aldol and decarboxylation reactions. This Corynebacterium glutamicum (strain ATCC 13032 / DSM 20300 / JCM 1318 / BCRC 11384 / CCUG 27702 / LMG 3730 / NBRC 12168 / NCIMB 10025 / NRRL B-2784 / 534) protein is Putative 4-hydroxy-4-methyl-2-oxoglutarate aldolase.